A 515-amino-acid polypeptide reads, in one-letter code: Maturase K (515 aa).

It belongs to the intron maturase 2 family. MatK subfamily.

It localises to the plastid. The protein localises to the chloroplast. In terms of biological role, usually encoded in the trnK tRNA gene intron. Probably assists in splicing its own and other chloroplast group II introns. The protein is Maturase K of Pinus contorta (Shore pine).